The following is a 270-amino-acid chain: MDPINQRIGDMLARIRATRPLIHHITNLVVMNDTANVTLHVGGLPVMAHDAEEVAEMVAHAGALVLNVGTLSPDWIESMLIAGRRANELQTPVVLDPVGAGATQLRTRTNLELLRSLRIAVVRGNGGEIGALSGEGGEVKGVESVSGPEDPLTAARRLAQTYHTVVALTGARDIITDGERVLTVNNGHIWLTTLTGTGCMATTMVAAFAAVERDYLLAAAGGLAMFGLAAELAAEKAHGPASFKVALFDQIYNLTPEQVANGARVVEGGS.

Met47 contacts substrate. ATP is bound by residues Arg123 and Thr169. Substrate is bound at residue Gly196.

Belongs to the Thz kinase family. The cofactor is Mg(2+).

It catalyses the reaction 5-(2-hydroxyethyl)-4-methylthiazole + ATP = 4-methyl-5-(2-phosphooxyethyl)-thiazole + ADP + H(+). It participates in cofactor biosynthesis; thiamine diphosphate biosynthesis; 4-methyl-5-(2-phosphoethyl)-thiazole from 5-(2-hydroxyethyl)-4-methylthiazole: step 1/1. Catalyzes the phosphorylation of the hydroxyl group of 4-methyl-5-beta-hydroxyethylthiazole (THZ). The polypeptide is Hydroxyethylthiazole kinase (Roseiflexus sp. (strain RS-1)).